The sequence spans 158 residues: Cyclic pyranopterin monophosphate synthase (158 aa).

Residues Met76–His78 and Met114–Glu115 contribute to the substrate site. Residue Asp129 is part of the active site.

The protein belongs to the MoaC family. Homohexamer; trimer of dimers.

It catalyses the reaction (8S)-3',8-cyclo-7,8-dihydroguanosine 5'-triphosphate = cyclic pyranopterin phosphate + diphosphate. The protein operates within cofactor biosynthesis; molybdopterin biosynthesis. Its function is as follows. Catalyzes the conversion of (8S)-3',8-cyclo-7,8-dihydroguanosine 5'-triphosphate to cyclic pyranopterin monophosphate (cPMP). The polypeptide is Cyclic pyranopterin monophosphate synthase (Clostridium perfringens (strain SM101 / Type A)).